The following is a 536-amino-acid chain: uncharacterized protein (536 aa).

The segment at 71–98 adopts an SWIM-type zinc-finger fold; that stretch reads LFVIVKSGCSCPSGRICRHMLAVFLYVY. Residues 482–528 adopt a coiled-coil conformation; the sequence is YKEAARYLKKLRTLYKKAKKQKVWERYIQLLSSHYKRLRALQEELQK.

This is an uncharacterized protein from Bacillus subtilis (strain 168).